The following is a 179-amino-acid chain: O-acetyl-ADP-ribose deacetylase (179 aa).

The Macro domain maps to 1–175 (MTSRLQVIQG…LYARLLTQQG (175 aa)). Substrate-binding positions include 11–12 (DI), asparagine 25, 33–35 (GVD), and 122–126 (STGVY). Catalysis depends on aspartate 35, which acts as the Proton acceptor.

The protein belongs to the MacroD-type family. YmdB subfamily. In terms of assembly, homodimer. Interacts with RNase III.

It carries out the reaction 3''-O-acetyl-ADP-D-ribose + H2O = ADP-D-ribose + acetate + H(+). It catalyses the reaction 2''-O-acetyl-ADP-D-ribose + H2O = ADP-D-ribose + acetate + H(+). Functionally, deacetylates O-acetyl-ADP ribose to yield ADP-ribose and free acetate. Down-regulates ribonuclease 3 (RNase III) activity. Acts by interacting directly with the region of the ribonuclease that is required for dimerization/activation. The protein is O-acetyl-ADP-ribose deacetylase of Salmonella newport (strain SL254).